Here is a 173-residue protein sequence, read N- to C-terminus: C-phycocyanin-3 beta subunit (173 aa).

Asn-73 carries the post-translational modification N4-methylasparagine. (2R,3E)-phycocyanobilin contacts are provided by Cys-83 and Cys-154.

It belongs to the phycobiliprotein family. In terms of assembly, heterodimer of an alpha and a beta subunit, which further assembles into trimers and the trimers into hexamers. Post-translationally, contains two covalently linked bilin chromophores.

The protein resides in the cellular thylakoid membrane. Light-harvesting photosynthetic bile pigment-protein from the phycobiliprotein complex (phycobilisome, PBS). Phycocyanin is the major phycobiliprotein in the PBS rod. This chain is C-phycocyanin-3 beta subunit (cpcB3), found in Microchaete diplosiphon (Fremyella diplosiphon).